A 99-amino-acid polypeptide reads, in one-letter code: Keratinocyte differentiation-associated protein (99 aa).

The signal sequence occupies residues Met1 to Gly22.

Highly expressed in skin and detected at lower levels in thymus. In skin, found exclusively in lamellar granules of granular keratinocytes and in the intracellular space of the stratum corneum. Also highly expressed in oral mucosa, tongue, esophagus, and stomach, and at much lower levels in bladder and uterus. Not detected in gastrointestinal mucosa.

The protein localises to the secreted. May act as a soluble regulator of keratinocyte differentiation. May play an important role in embryonic skin morphogenesis. The sequence is that of Keratinocyte differentiation-associated protein (KRTDAP) from Homo sapiens (Human).